The following is a 1137-amino-acid chain: MNDMAKPLPTPPTAEIRKSRSNSPKKAQKTNLSPNKNQNNEKNVPRSNGRTKNEHNSMDDEEFEFFHQFSREKVKGVIHVITAELKEKGPDVEFLMIPFRPEQTNDKLLTLLNQLFPLGNGQPVNEKKQLRIVSKADVWTLFQCLKYIWCRLPNSEIIGWKSYLEFKFREEDKKFPRKSFLEIMPQCLASPNHASIVYDFFDLIISISSNSRVNKMSARKISKMCAIWAFSKQIPNSDIQDYDFESAAMKSFAPNNSIQDGLDQWIPASDAMFHLLLAFLRSFVPQDLESAKLPRTLKSLLFNNQYPPRKSTAYTSETILTIPLVTLKTDVFSRKPWQLLERCNDLLDFSDHDAFEAREDYALLKSLFRKKNTVEGISRKMSQESRRLMKAMSTKHSTFQPGWAPRECIENISHLKECIEVKRLDIDDYFIWTWLSSLSFEQTSEKKKIFGRSIILEFEFDGFKKWVVFQECDITLDYNKKGQLKKKTSAQSPTTEKELPPDDFELEDPPLSKSPTLSQTYKKFQAEVPQQSTVRRDSAPDNQGIYHTVISKNALTKNKHNVNLHSFEHKISKWNPLNNLRKKSGSNSSSSSFEEKSKDAPIREEYHTNKNHKSKKEERVLSQFSTLNPDEYQLPVIETGSSNFKIEIPELMYEHDDDDSDKLKNSQKRATDSAIEELNGMVEEMMINEPDDVKISITEAETFESLTKFDQYKPSNITDDDLQSSHSSAVHSLKLSTNTNDSCADSSKYTADRKLAEPRKISEESKVNDDSSSYYSPNINNLPASRMPSQPTYSNSDSKKAFTNESRLNVLQGAVSPSQQVTPKPYKNAPGDCVSPVQQKYYQNDRRNEMSPASAPVPPSAYSPARSPQFSTNSAGFKQNTINVPVGYNDPAHVLANQPHMTYRDQHNYPSHQQKQRPFQNNIVPPELKSRNQRADASPIPQHMVPVKQGVPNLPSNVPLYQQMERMNPNHQHPVNTYKVTQPPYHNNTTNAYGNSRAGNAHMLDGKWSNNPPQMVPKGVRPNQYPQQHVNRYSPQAQPVVPAEYYNGPPPMRAPPMMSHMVPAQEPIRYTAGANRRSFPQGMQQNAYSVPAQPMGAVNSEFYLPEAPQGNKLHGNINKRQERKKLYDNIRSGNFGI.

Disordered regions lie at residues 1–59 (MNDM…NSMD) and 483–520 (QLKK…LSQT). The span at 21–50 (SNSPKKAQKTNLSPNKNQNNEKNVPRSNGR) shows a compositional bias: polar residues. Ser-538 carries the post-translational modification Phosphoserine. Disordered stretches follow at residues 577 to 620 (LNNL…EERV), 736 to 799 (STNT…SDSK), and 814 to 871 (AVSP…PQFS). The segment covering 593–608 (FEEKSKDAPIREEYHT) has biased composition (basic and acidic residues). Polar residues predominate over residues 736–749 (STNTNDSCADSSKY). Residues 750–769 (TADRKLAEPRKISEESKVND) are compositionally biased toward basic and acidic residues. Polar residues predominate over residues 770–796 (DSSSYYSPNINNLPASRMPSQPTYSNS). A phosphoserine mark is found at Ser-776 and Ser-816.

In terms of biological role, may play a role in polarity establishment and bud formation. The MSB1 gene may be functionally redundant. The chain is Morphogenesis-related protein MSB1 (MSB1) from Saccharomyces cerevisiae (strain ATCC 204508 / S288c) (Baker's yeast).